The sequence spans 474 residues: Tumor necrosis factor receptor superfamily member 1B (474 aa).

The signal sequence occupies residues M1–T22. Over V23–G258 the chain is Extracellular. The O-linked (GalNAc...) threonine glycan is linked to T30. 4 TNFR-Cys repeats span residues E39–A77, D78–C119, A120–K164, and A165–A203. Cystine bridges form between C40/C54, C55/C68, C58/C76, C79/C94, C97/C111, C101/C119, C121/C127, C136/C145, C139/C163, and C166/C181. N-linked (GlcNAc...) asparagine glycosylation occurs at N69. N195 carries an N-linked (GlcNAc...) asparagine glycan. Residues T208 and T224 are each glycosylated (O-linked (GalNAc...) threonine). Positions Q220–T243 are disordered. The chain crosses the membrane as a helical span at residues I259–R288. The Cytoplasmic segment spans residues K289–A474. Disordered regions lie at residues L295–G314, L321–G378, and S397–A463. A compositionally biased stretch (basic and acidic residues) spans R297–Q310. 2 stretches are compositionally biased toward low complexity: residues A324–A338 and A363–G378. Position 331 is a phosphoserine (S331). Positions E429–L442 are enriched in polar residues.

As to quaternary structure, binds to TRAF2. Interacts with BMX. Interacts (activated form) with XPNPEP3.

It localises to the membrane. Receptor with high affinity for TNFSF2/TNF-alpha and approximately 5-fold lower affinity for homotrimeric TNFSF1/lymphotoxin-alpha. The TRAF1/TRAF2 complex recruits the apoptotic suppressors BIRC2 and BIRC3 to TNFRSF1B/TNFR2. This is Tumor necrosis factor receptor superfamily member 1B (Tnfrsf1b) from Mus musculus (Mouse).